Here is a 496-residue protein sequence, read N- to C-terminus: MIVSWSLKDAVVVVVGSGKNAYRRVNLCLSENSSKIFWFCRSSADGGFDVGHLQLDAKKSDAIEILPISEFDPVRSLTTLGKEETDFLVDAVFVSESNHHEKEILHRTCKRYRIPLNIIDNPSLCSFTLPATWSEPPLQISLSTSSNGCRLAQRLLRHVVSSLPSGMPEAIERFGRVRAITKTPEKKQWINHVSDFWPLEKLVRMTEDDLLAIVSDNFSLPLSSSQSSSLANSYESLSTTLDKPSLTLDPEAFPTHKRGSIALIGSGPGSPDLLTVAARKAIMKADYVLADKLVPEAVLQLIPRHTPLFIARKFPGNADKAQDELHQVAFDALSRGDYVVRLKQGDPYIYGRGGEEYLFFTQHGYVPTVIPGISSALMAPISAGIPVTHRGVADQFLVCTGTGQKGSMPKIPSFVPTQTTVFLMALHRLEILVQALIESGWPRVLPVCIAERVSCPDQRFIFSTLEDVVEEYNKYESLPPGLLITGYSCNTLRNTA.

It belongs to the precorrin methyltransferase family.

It carries out the reaction uroporphyrinogen III + 2 S-adenosyl-L-methionine = precorrin-2 + 2 S-adenosyl-L-homocysteine + H(+). Siroheme synthase involved in methionine biosynthesis. The protein is Probable uroporphyrinogen-III C-methyltransferase of Schizosaccharomyces pombe (strain 972 / ATCC 24843) (Fission yeast).